Consider the following 395-residue polypeptide: Chorismate synthase (395 aa).

NADP(+)-binding residues include R40 and R46. FMN contacts are provided by residues 134 to 136 (RAS), 256 to 257 (QA), G301, 316 to 320 (KPIST), and R342.

This sequence belongs to the chorismate synthase family. As to quaternary structure, homotetramer. It depends on FMNH2 as a cofactor.

It catalyses the reaction 5-O-(1-carboxyvinyl)-3-phosphoshikimate = chorismate + phosphate. Its pathway is metabolic intermediate biosynthesis; chorismate biosynthesis; chorismate from D-erythrose 4-phosphate and phosphoenolpyruvate: step 7/7. Catalyzes the anti-1,4-elimination of the C-3 phosphate and the C-6 proR hydrogen from 5-enolpyruvylshikimate-3-phosphate (EPSP) to yield chorismate, which is the branch point compound that serves as the starting substrate for the three terminal pathways of aromatic amino acid biosynthesis. This reaction introduces a second double bond into the aromatic ring system. The polypeptide is Chorismate synthase (Beutenbergia cavernae (strain ATCC BAA-8 / DSM 12333 / CCUG 43141 / JCM 11478 / NBRC 16432 / NCIMB 13614 / HKI 0122)).